The sequence spans 43 residues: Holotricin-1 (43 aa).

3 cysteine pairs are disulfide-bonded: C3-C34, C20-C39, and C24-C41.

The protein belongs to the invertebrate defensin family. Type 1 subfamily. Hemolymph.

Its subcellular location is the secreted. Shows potent antibacterial activity against Gram-positive bacteria. This chain is Holotricin-1, found in Holotrichia diomphalia (Korean black chafer).